The primary structure comprises 147 residues: Putative 2'-deoxynucleoside 5'-phosphate N-hydrolase 1 (147 aa).

Substrate-binding positions include 10–16 (YFCGSIR), tyrosine 25, histidine 42, glutamate 90, and 114–116 (SAM).

It belongs to the 2'-deoxynucleoside 5'-phosphate N-hydrolase 1 family. Monomer and homodimer.

It localises to the cytoplasm. The protein resides in the nucleus. The catalysed reaction is a pyrimidine 2'-deoxyribonucleoside 5'-phosphate + H2O = a pyrimidine nucleobase + 2-deoxy-D-ribose 5-phosphate. The enzyme catalyses a purine 2'-deoxyribonucleoside 5'-phosphate + H2O = a purine nucleobase + 2-deoxy-D-ribose 5-phosphate. In terms of biological role, catalyzes the cleavage of the N-glycosidic bond of deoxyribonucleoside 5'-monophosphates to yield deoxyribose 5-phosphate and a purine or pyrimidine base. The chain is Putative 2'-deoxynucleoside 5'-phosphate N-hydrolase 1 from Nematostella vectensis (Starlet sea anemone).